The chain runs to 1168 residues: Transcription-repair-coupling factor (1168 aa).

One can recognise a Helicase ATP-binding domain in the interval 633–794 (DMQKSRPMDR…MLGVRDLSVI (162 aa)). 646–653 (GDVGYGKT) contributes to the ATP binding site. The DEEQ box signature appears at 747–750 (DEEQ). Residues 808-969 (VLEQNMSFIK…GFKIAMRDLN (162 aa)) enclose the Helicase C-terminal domain.

In the N-terminal section; belongs to the UvrB family. It in the C-terminal section; belongs to the helicase family. RecG subfamily.

It localises to the cytoplasm. Its function is as follows. Couples transcription and DNA repair by recognizing RNA polymerase (RNAP) stalled at DNA lesions. Mediates ATP-dependent release of RNAP and its truncated transcript from the DNA, and recruitment of nucleotide excision repair machinery to the damaged site. This is Transcription-repair-coupling factor from Staphylococcus aureus (strain USA300).